Consider the following 472-residue polypeptide: Adenosylhomocysteinase (472 aa).

Substrate-binding residues include Thr62, Asp137, and Glu197. 198-200 (TTT) lines the NAD(+) pocket. Substrate contacts are provided by Lys227 and Asp231. NAD(+)-binding positions include Asn232, 261 to 266 (GYGDVG), Glu284, Asn319, 340 to 342 (IGH), and Asn385.

The protein belongs to the adenosylhomocysteinase family. The cofactor is NAD(+).

Its subcellular location is the cytoplasm. The catalysed reaction is S-adenosyl-L-homocysteine + H2O = L-homocysteine + adenosine. It participates in amino-acid biosynthesis; L-homocysteine biosynthesis; L-homocysteine from S-adenosyl-L-homocysteine: step 1/1. Its function is as follows. May play a key role in the regulation of the intracellular concentration of adenosylhomocysteine. This is Adenosylhomocysteinase from Bordetella pertussis (strain Tohama I / ATCC BAA-589 / NCTC 13251).